We begin with the raw amino-acid sequence, 470 residues long: ATP synthase subunit beta (470 aa).

Position 157–164 (157–164 (GGAGVGKT)) interacts with ATP.

Belongs to the ATPase alpha/beta chains family. F-type ATPases have 2 components, CF(1) - the catalytic core - and CF(0) - the membrane proton channel. CF(1) has five subunits: alpha(3), beta(3), gamma(1), delta(1), epsilon(1). CF(0) has three main subunits: a(1), b(2) and c(9-12). The alpha and beta chains form an alternating ring which encloses part of the gamma chain. CF(1) is attached to CF(0) by a central stalk formed by the gamma and epsilon chains, while a peripheral stalk is formed by the delta and b chains.

The protein resides in the cell inner membrane. It catalyses the reaction ATP + H2O + 4 H(+)(in) = ADP + phosphate + 5 H(+)(out). Its function is as follows. Produces ATP from ADP in the presence of a proton gradient across the membrane. The catalytic sites are hosted primarily by the beta subunits. In Geobacter sp. (strain M21), this protein is ATP synthase subunit beta.